The sequence spans 62 residues: DNA-binding protein 7 (62 aa).

It belongs to the 7 kDa DNA-binding/endoribonuclease P2 family. As to quaternary structure, monomer.

It is found in the cytoplasm. Its function is as follows. Can constrain negative DNA supercoils. May be involved in maintaining the integrity of the genome at high temperature. This chain is DNA-binding protein 7, found in Metallosphaera cuprina (strain Ar-4).